Consider the following 899-residue polypeptide: Translation initiation factor IF-2 (899 aa).

Disordered regions lie at residues 116–135 (AKAR…ARLQ), 170–189 (RGGG…EQKK), and 262–306 (DREI…ANKH). Positions 399 to 568 (TRPPVVTIMG…LIQSELMELK (170 aa)) constitute a tr-type G domain. The segment at 408–415 (GHVDHGKT) is G1. 408–415 (GHVDHGKT) contacts GTP. A G2 region spans residues 433 to 437 (GITQH). The G3 stretch occupies residues 454–457 (DTPG). GTP-binding positions include 454–458 (DTPGH) and 508–511 (NKMD). Residues 508-511 (NKMD) are G4. The interval 544 to 546 (SAH) is G5.

It belongs to the TRAFAC class translation factor GTPase superfamily. Classic translation factor GTPase family. IF-2 subfamily.

Its subcellular location is the cytoplasm. One of the essential components for the initiation of protein synthesis. Protects formylmethionyl-tRNA from spontaneous hydrolysis and promotes its binding to the 30S ribosomal subunits. Also involved in the hydrolysis of GTP during the formation of the 70S ribosomal complex. This chain is Translation initiation factor IF-2, found in Acinetobacter baumannii (strain AB307-0294).